Here is a 113-residue protein sequence, read N- to C-terminus: Mitochondrial import inner membrane translocase subunit tim16 (113 aa).

Positions K56–K108 are J-like.

Belongs to the TIM16/PAM16 family. Probable component of the PAM complex at least composed of a mitochondrial HSP70 protein, grepE, tim16 and tim14. Associates with the TIM23 complex.

It is found in the mitochondrion inner membrane. Its function is as follows. Regulates ATP-dependent protein translocation into the mitochondrial matrix. The polypeptide is Mitochondrial import inner membrane translocase subunit tim16 (timm16) (Dictyostelium discoideum (Social amoeba)).